The chain runs to 118 residues: Large ribosomal subunit protein uL18 (118 aa).

The protein belongs to the universal ribosomal protein uL18 family. Part of the 50S ribosomal subunit; part of the 5S rRNA/L5/L18/L25 subcomplex. Contacts the 5S and 23S rRNAs.

This is one of the proteins that bind and probably mediate the attachment of the 5S RNA into the large ribosomal subunit, where it forms part of the central protuberance. This is Large ribosomal subunit protein uL18 from Caulobacter sp. (strain K31).